We begin with the raw amino-acid sequence, 444 residues long: Ribosomal protein uS12 methylthiotransferase RimO (444 aa).

Residues 4-120 (KSAALVSLGC…LKSFIRDHEA (117 aa)) form the MTTase N-terminal domain. [4Fe-4S] cluster contacts are provided by Cys13, Cys49, Cys83, Cys157, Cys161, and Cys164. One can recognise a Radical SAM core domain in the interval 143–371 (VEGRSSAYVK…LELQRGISRR (229 aa)). Residues 374–442 (ESLVGRVLPV…DYDVEAELLS (69 aa)) form the TRAM domain.

This sequence belongs to the methylthiotransferase family. RimO subfamily. It depends on [4Fe-4S] cluster as a cofactor.

It localises to the cytoplasm. It carries out the reaction L-aspartate(89)-[ribosomal protein uS12]-hydrogen + (sulfur carrier)-SH + AH2 + 2 S-adenosyl-L-methionine = 3-methylsulfanyl-L-aspartate(89)-[ribosomal protein uS12]-hydrogen + (sulfur carrier)-H + 5'-deoxyadenosine + L-methionine + A + S-adenosyl-L-homocysteine + 2 H(+). Catalyzes the methylthiolation of an aspartic acid residue of ribosomal protein uS12. This is Ribosomal protein uS12 methylthiotransferase RimO from Syntrophobacter fumaroxidans (strain DSM 10017 / MPOB).